A 40-amino-acid polypeptide reads, in one-letter code: Omega-conotoxin RsXXVIA (40 aa).

Post-translationally, contains 4 disulfide bonds. Expressed by the venom duct.

The protein resides in the secreted. Its function is as follows. Omega-conotoxins act at presynaptic membranes, they bind and block voltage-gated calcium channels (Cav). This toxin inhibits rat Cav2.2/CACNA1B calcium channels in a dose-dependent manner (EC(50)=2.8 uM), whose effect is partially reversed after washing. In vivo, when injected into mice, it shows both an analgesic effect in acute thermal pain at 30 and 45 minutes post-injection and an anti-nociceptive effect in a formalin chronic pain test. In Conus regularis (Regular cone), this protein is Omega-conotoxin RsXXVIA.